An 895-amino-acid polypeptide reads, in one-letter code: Microsomal triglyceride transfer protein large subunit (895 aa).

Residues 1–18 (MILLAVLFLCFFSSYSAS) form the signal peptide. Residues 28 to 659 (LNNERLYKLT…VFQYLGKAGL (632 aa)) enclose the Vitellogenin domain. Cysteine 174 and cysteine 194 are joined by a disulfide.

Heterodimer; heterodimerizes with the protein disulfide isomerase (P4HB/PDI). Interacts with APOB. Interacts with PRAP1.

The protein resides in the endoplasmic reticulum. It is found in the golgi apparatus. The enzyme catalyses a 1,2-diacyl-sn-glycero-3-phosphocholine(in) = a 1,2-diacyl-sn-glycero-3-phosphocholine(out). It catalyses the reaction a 1,2-diacyl-sn-glycero-3-phosphoethanolamine(in) = a 1,2-diacyl-sn-glycero-3-phosphoethanolamine(out). It carries out the reaction a cholesterol ester(in) = a cholesterol ester(out). The catalysed reaction is a triacyl-sn-glycerol(in) = a triacyl-sn-glycerol(out). Its function is as follows. Catalyzes the transport of triglyceride, cholesteryl ester, and phospholipid between phospholipid surfaces. Required for the assembly and secretion of plasma lipoproteins that contain apolipoprotein B. May be involved in regulating cholesteryl ester biosynthesis in cells that produce lipoproteins. The chain is Microsomal triglyceride transfer protein large subunit (MTTP) from Mesocricetus auratus (Golden hamster).